The following is a 177-amino-acid chain: Large ribosomal subunit protein uL6 (177 aa).

It belongs to the universal ribosomal protein uL6 family. As to quaternary structure, part of the 50S ribosomal subunit.

Functionally, this protein binds to the 23S rRNA, and is important in its secondary structure. It is located near the subunit interface in the base of the L7/L12 stalk, and near the tRNA binding site of the peptidyltransferase center. The protein is Large ribosomal subunit protein uL6 of Klebsiella pneumoniae (strain 342).